We begin with the raw amino-acid sequence, 74 residues long: Control protein C.MunI (74 aa).

Residues 12–67 form the HTH cro/C1-type domain; sequence LKKLRKEKTDLSQESFAAQIDLDRTYYSSIENGKRNVSLVNLEKISAGLGITLSEL. A DNA-binding region (H-T-H motif) is located at residues 23–42; that stretch reads SQESFAAQIDLDRTYYSSIE.

Functionally, probably controls expression of its associated restriction-modification system MunI. The chain is Control protein C.MunI from Mycoplasma sp.